A 299-amino-acid polypeptide reads, in one-letter code: Taste receptor type 2 member 42 (299 aa).

Topologically, residues 1-7 (MATELDK) are extracellular. The helical transmembrane segment at 8 to 28 (IFLILAIAEFIISMLGNVFIG) threads the bilayer. At 29 to 50 (LVNCSEGIKNQKVFSSDFILTS) the chain is on the cytoplasmic side. A helical transmembrane segment spans residues 51–71 (LAISTIGQLLVILFDSFLVGL). The Extracellular portion of the chain corresponds to 72 to 101 (ASHLYTTYRLGKPVIMLWHMTNHLTTWLAT). Residues 102-122 (CLSVFYFFKIAHFPHSLFLWL) form a helical membrane-spanning segment. The Cytoplasmic segment spans residues 123–127 (RWRMN). A helical membrane pass occupies residues 128–148 (GMIAMLLILSLFLLIFDSSVL). Residues 149 to 187 (EIFIDISLNIIDKSSLTLYLDESKTLYDKLSILKTLLSL) lie on the Extracellular side of the membrane. The chain crosses the membrane as a helical span at residues 188-208 (TSFIPFSLSLTSVLFLYLSLV). At 209-238 (RHTRNLKLSSLGSRDSSTEAHRRAMKMVMS) the chain is on the cytoplasmic side. The helical transmembrane segment at 239-259 (FLFLFIVHFFSLQVANWIFFM) threads the bilayer. The Extracellular portion of the chain corresponds to 260–265 (LWNNKY). Residues 266–286 (IKFVMLALNAFPSCHSFILIL) traverse the membrane as a helical segment. The Cytoplasmic segment spans residues 287-299 (GNSKLRQTAVRLL).

This sequence belongs to the G-protein coupled receptor T2R family.

It is found in the membrane. In terms of biological role, receptor that may play a role in the perception of bitterness and is gustducin-linked. May play a role in sensing the chemical composition of the gastrointestinal content. The activity of this receptor may stimulate alpha gustducin, mediate PLC-beta-2 activation and lead to the gating of TRPM5. The protein is Taste receptor type 2 member 42 (TAS2R42) of Gorilla gorilla gorilla (Western lowland gorilla).